The primary structure comprises 288 residues: dTDP-4-keto-6-deoxy-D-glucose reductase (288 aa).

NADH-binding positions include 12 to 14, 38 to 39, 62 to 64, Y127, and K131; these read GML, DI, and AWT. NADPH is bound by residues 13–14, 38–39, 62–64, Y127, and K131; these read ML, DI, and AWT. Y127 (proton donor/acceptor) is an active-site residue.

This sequence belongs to the dTDP-4-dehydrorhamnose reductase family. It depends on Mg(2+) as a cofactor.

Its pathway is antibiotic biosynthesis; novobiocin biosynthesis. Reduces the product formed from the reaction of NovW with dTDP-4-keto-6-deoxy-D-glucose to result in dTDP-5-methyl-L-rhamnose in the novobiocin biosynthesis pathway, an aminocoumarin family antibiotic that targets bacterial DNA gyrases. The protein is dTDP-4-keto-6-deoxy-D-glucose reductase (novS) of Streptomyces niveus (Streptomyces spheroides).